Consider the following 100-residue polypeptide: Large ribosomal subunit protein uL23 (100 aa).

It belongs to the universal ribosomal protein uL23 family. As to quaternary structure, part of the 50S ribosomal subunit. Contacts protein L29, and trigger factor when it is bound to the ribosome.

Functionally, one of the early assembly proteins it binds 23S rRNA. One of the proteins that surrounds the polypeptide exit tunnel on the outside of the ribosome. Forms the main docking site for trigger factor binding to the ribosome. The polypeptide is Large ribosomal subunit protein uL23 (Shewanella piezotolerans (strain WP3 / JCM 13877)).